The primary structure comprises 217 residues: Probable transaldolase (217 aa).

The Schiff-base intermediate with substrate role is filled by Lys-83.

Belongs to the transaldolase family. Type 3B subfamily.

It is found in the cytoplasm. It catalyses the reaction D-sedoheptulose 7-phosphate + D-glyceraldehyde 3-phosphate = D-erythrose 4-phosphate + beta-D-fructose 6-phosphate. The protein operates within carbohydrate degradation; pentose phosphate pathway; D-glyceraldehyde 3-phosphate and beta-D-fructose 6-phosphate from D-ribose 5-phosphate and D-xylulose 5-phosphate (non-oxidative stage): step 2/3. Its function is as follows. Transaldolase is important for the balance of metabolites in the pentose-phosphate pathway. This chain is Probable transaldolase, found in Caldicellulosiruptor saccharolyticus (strain ATCC 43494 / DSM 8903 / Tp8T 6331).